The primary structure comprises 285 residues: Probable endonuclease 4 (285 aa).

Positions 67, 107, 144, 177, 180, 214, 227, 229, and 259 each coordinate Zn(2+).

Belongs to the AP endonuclease 2 family. It depends on Zn(2+) as a cofactor.

The enzyme catalyses Endonucleolytic cleavage to 5'-phosphooligonucleotide end-products.. In terms of biological role, endonuclease IV plays a role in DNA repair. It cleaves phosphodiester bonds at apurinic or apyrimidinic (AP) sites, generating a 3'-hydroxyl group and a 5'-terminal sugar phosphate. The chain is Probable endonuclease 4 from Persephonella marina (strain DSM 14350 / EX-H1).